We begin with the raw amino-acid sequence, 264 residues long: General transcription factor IIF subunit 2 (264 aa).

This sequence belongs to the TFIIF beta subunit family. Heterodimer of an alpha and a beta subunit.

It is found in the nucleus. Functionally, TFIIF is a general transcription initiation factor that binds to RNA polymerase II and helps to recruit it to the initiation complex in collaboration with TFIIB. The sequence is that of General transcription factor IIF subunit 2 (gtf2f2) from Xenopus laevis (African clawed frog).